A 2298-amino-acid chain; its full sequence is Protein Ycf2 (2298 aa).

Residue G1638–S1645 coordinates ATP.

The protein belongs to the Ycf2 family.

The protein localises to the plastid. The protein resides in the chloroplast stroma. Functionally, probable ATPase of unknown function. Its presence in a non-photosynthetic plant (Epifagus virginiana) and experiments in tobacco indicate that it has an essential function which is probably not related to photosynthesis. In Gossypium barbadense (Sea Island cotton), this protein is Protein Ycf2.